The chain runs to 226 residues: 7-carboxy-7-deazaguanine synthase (226 aa).

Substrate contacts are provided by residues 10-12 and arginine 25; that span reads LQG. The region spanning 16-221 is the Radical SAM core domain; that stretch reads YTGIPCIFVR…LQTHKFIWTP (206 aa). Positions 29, 33, and 36 each coordinate [4Fe-4S] cluster. Residue serine 38 participates in Mg(2+) binding. Threonine 69 serves as a coordination point for substrate. Glycine 71 contributes to the S-adenosyl-L-methionine binding site.

Belongs to the radical SAM superfamily. 7-carboxy-7-deazaguanine synthase family. As to quaternary structure, homodimer. The cofactor is [4Fe-4S] cluster. S-adenosyl-L-methionine is required as a cofactor. It depends on Mg(2+) as a cofactor.

The catalysed reaction is 6-carboxy-5,6,7,8-tetrahydropterin + H(+) = 7-carboxy-7-deazaguanine + NH4(+). It participates in purine metabolism; 7-cyano-7-deazaguanine biosynthesis. Catalyzes the complex heterocyclic radical-mediated conversion of 6-carboxy-5,6,7,8-tetrahydropterin (CPH4) to 7-carboxy-7-deazaguanine (CDG), a step common to the biosynthetic pathways of all 7-deazapurine-containing compounds. This chain is 7-carboxy-7-deazaguanine synthase, found in Koribacter versatilis (strain Ellin345).